The chain runs to 284 residues: Type II methyltransferase M1.LlaDCHI (284 aa).

4 residues coordinate S-adenosyl-L-methionine: Trp-17, Lys-21, Asp-62, and Asp-194.

The protein belongs to the N(4)/N(6)-methyltransferase family.

The catalysed reaction is a 2'-deoxyadenosine in DNA + S-adenosyl-L-methionine = an N(6)-methyl-2'-deoxyadenosine in DNA + S-adenosyl-L-homocysteine + H(+). In terms of biological role, an alpha subtype methylase, recognizes the double-stranded sequence 5'-GATC-3', methylates A-2 on both strands, and protects the DNA from cleavage by the LlaDCHI endonuclease. The sequence is that of Type II methyltransferase M1.LlaDCHI from Lactococcus lactis subsp. cremoris (Streptococcus cremoris).